The primary structure comprises 417 residues: Tryptophan synthase beta chain (417 aa).

Lys99 carries the post-translational modification N6-(pyridoxal phosphate)lysine.

Belongs to the TrpB family. As to quaternary structure, tetramer of two alpha and two beta chains. Requires pyridoxal 5'-phosphate as cofactor.

It catalyses the reaction (1S,2R)-1-C-(indol-3-yl)glycerol 3-phosphate + L-serine = D-glyceraldehyde 3-phosphate + L-tryptophan + H2O. It functions in the pathway amino-acid biosynthesis; L-tryptophan biosynthesis; L-tryptophan from chorismate: step 5/5. In terms of biological role, the beta subunit is responsible for the synthesis of L-tryptophan from indole and L-serine. This chain is Tryptophan synthase beta chain (trpB), found in Corynebacterium glutamicum (strain ATCC 13032 / DSM 20300 / JCM 1318 / BCRC 11384 / CCUG 27702 / LMG 3730 / NBRC 12168 / NCIMB 10025 / NRRL B-2784 / 534).